The primary structure comprises 319 residues: MHTVTQTSLYGKDLLTLKDLSEEDINALLAEAGELKQNKIQPIFHGKTLAMIFEKSSTRTRVSFEAGMAQLGGSALFLSQKDLQLGRGETVADTAKVLSGYVDAIMIRTFEHEKVEELAKEADIPVINGLTDKYHPCQALADLLTIKEIKGKLKGVKVAYIGDGNNVAHSLMIGCAKMGCDISIASPKGYEVLDEAAEAAKTYALQSGSSVTLTDDPIEAVKDADVIYSDVFTSMGQEAEEQERLAVFAPYQVNAALVSHAKPDYTFLHCLPAHREEEVTAEIIDGPNSAVFQQAENRLHVQKALLKAILYKGESSKNC.

Residues 57 to 60 (STRT), Gln84, Arg108, and 135 to 138 (HPCQ) each bind carbamoyl phosphate. L-ornithine-binding positions include Asn166, Asp230, and 234 to 235 (SM). Residues 270 to 271 (CL) and Arg298 contribute to the carbamoyl phosphate site.

This sequence belongs to the aspartate/ornithine carbamoyltransferase superfamily. OTCase family.

The protein resides in the cytoplasm. It carries out the reaction carbamoyl phosphate + L-ornithine = L-citrulline + phosphate + H(+). It functions in the pathway amino-acid biosynthesis; L-arginine biosynthesis; L-arginine from L-ornithine and carbamoyl phosphate: step 1/3. In terms of biological role, reversibly catalyzes the transfer of the carbamoyl group from carbamoyl phosphate (CP) to the N(epsilon) atom of ornithine (ORN) to produce L-citrulline. The sequence is that of Ornithine carbamoyltransferase (argF) from Bacillus subtilis (strain 168).